Reading from the N-terminus, the 335-residue chain is Methylthioribose-1-phosphate isomerase (335 aa).

Residues 43-45 (RGA), Arg-86, and Gln-193 each bind substrate. Asp-234 serves as the catalytic Proton donor. 244 to 245 (NK) contributes to the substrate binding site.

Belongs to the eIF-2B alpha/beta/delta subunits family. MtnA subfamily.

It catalyses the reaction 5-(methylsulfanyl)-alpha-D-ribose 1-phosphate = 5-(methylsulfanyl)-D-ribulose 1-phosphate. Its pathway is amino-acid biosynthesis; L-methionine biosynthesis via salvage pathway; L-methionine from S-methyl-5-thio-alpha-D-ribose 1-phosphate: step 1/6. Functionally, catalyzes the interconversion of methylthioribose-1-phosphate (MTR-1-P) into methylthioribulose-1-phosphate (MTRu-1-P). The chain is Methylthioribose-1-phosphate isomerase from Parabacteroides distasonis (strain ATCC 8503 / DSM 20701 / CIP 104284 / JCM 5825 / NCTC 11152).